The chain runs to 273 residues: Undecaprenyl-diphosphatase (273 aa).

A run of 7 helical transmembrane segments spans residues 6–26, 45–65, 90–110, 116–136, 190–210, 222–242, and 252–272; these read SLLIAAILGVVEGLTEFLPVS, AKTFEVVIQLGSILAVVVMFW, LTLIHILLGMIPAVVLGLLFH, LFNPINVMYALVVGGLLLIAA, YAASEFSFLLAVPMMMGATAL, GDIPMFAVGFITAFVVALIAI, and ISFIPFAIYRFIVAAAVYVVF.

It belongs to the UppP family.

It is found in the cell inner membrane. It carries out the reaction di-trans,octa-cis-undecaprenyl diphosphate + H2O = di-trans,octa-cis-undecaprenyl phosphate + phosphate + H(+). Functionally, catalyzes the dephosphorylation of undecaprenyl diphosphate (UPP). Confers resistance to bacitracin. The sequence is that of Undecaprenyl-diphosphatase from Escherichia coli O127:H6 (strain E2348/69 / EPEC).